A 173-amino-acid polypeptide reads, in one-letter code: Mesencephalic astrocyte-derived neurotrophic factor homolog (173 aa).

An N-terminal signal peptide occupies residues 1–22 (MKTWYMVVVIGFLATLAQTSLA). Disulfide bonds link Cys28–Cys114, Cys31–Cys103, Cys61–Cys72, and Cys148–Cys151.

Belongs to the ARMET family.

It is found in the secreted. Required during the maturation of the embryonic nervous system for maintenance of neuronal and cuticular connectivity. Essential for maintenance of dopaminergic neurons and dopamine levels. The polypeptide is Mesencephalic astrocyte-derived neurotrophic factor homolog (Drosophila erecta (Fruit fly)).